The sequence spans 902 residues: 4-hydroxyphenylacetate decarboxylase glycyl radical subunit (902 aa).

The PFL domain maps to 38-774 (KRAEDLLDVY…ATLATPDGRL (737 aa)). Ser-348 and Cys-507 together coordinate 4-hydroxyphenylacetate. Cys-507 acts as the Cysteine radical intermediate in catalysis. Glu-509 functions as the Proton donor in the catalytic mechanism. 2 residues coordinate 4-hydroxyphenylacetate: His-540 and Glu-641. Positions 782-902 (GSVSAYAGTD…VIARTEYEGV (121 aa)) constitute a Glycine radical domain. At Gly-877 the chain carries Glycine radical.

Belongs to the glycyl radical enzyme (GRE) family. HPAD subfamily. Heterooctamer consisting of 4 large (HpdB) subunits and 4 small (HpdC) subunits, arranged as a tetramer of heterodimers. Also forms a catalytically inactive homodimer. Requires the activating protein CsdA to generate the key active site glycyl radical that is involved in catalysis. In terms of processing, phosphorylated on serine. Phosphorylation may trigger the formation of the active heterooctamers and thereby regulates enzyme activity.

It catalyses the reaction 4-hydroxyphenylacetate + H(+) = 4-methylphenol + CO2. It carries out the reaction 3,4-dihydroxyphenylacetate + H(+) = 4-methylcatechol + CO2. Glycyl radical subunit of the HPA decarboxylase that decarboxylates phenylacetates with a hydroxyl group in the p-position. Active toward 4-hydroxyphenylacetate and 3,4-dihydroxyphenylacetate, forming 4-methylphenol and 4-methylcatechol, respectively. Is likely involved in the catabolism of aromatic amino acids such as tyrosine fermentation. 4-methylphenol (p-cresol) formation provides metabolic toxicity, which allows an active suppression of other microbes and may provide growth advantages for the producers in highly competitive environments. The large subunit is the catalytic subunit that binds the substrate. The chain is 4-hydroxyphenylacetate decarboxylase glycyl radical subunit from Clostridioides difficile (strain CD196) (Peptoclostridium difficile).